We begin with the raw amino-acid sequence, 877 residues long: Leucine--tRNA ligase (877 aa).

The short motif at 50–60 (PYPSGKLHMGH) is the 'HIGH' region element. Residues 634–638 (KMSKS) carry the 'KMSKS' region motif. Residue Lys637 participates in ATP binding.

This sequence belongs to the class-I aminoacyl-tRNA synthetase family.

It localises to the cytoplasm. The catalysed reaction is tRNA(Leu) + L-leucine + ATP = L-leucyl-tRNA(Leu) + AMP + diphosphate. The protein is Leucine--tRNA ligase of Hydrogenovibrio crunogenus (strain DSM 25203 / XCL-2) (Thiomicrospira crunogena).